The primary structure comprises 312 residues: Pyrimidine-specific ribonucleoside hydrolase RihA (312 aa).

H240 is an active-site residue.

The protein belongs to the IUNH family. RihA subfamily.

In terms of biological role, hydrolyzes cytidine or uridine to ribose and cytosine or uracil, respectively. This chain is Pyrimidine-specific ribonucleoside hydrolase RihA, found in Citrobacter koseri (strain ATCC BAA-895 / CDC 4225-83 / SGSC4696).